The chain runs to 258 residues: Small ribosomal subunit protein mS40 (258 aa).

A mitochondrion-targeting transit peptide spans 1 to 35; the sequence is MAASILNVLLRRLPGVSPFRGAYGVQVLLQTLCTK. Ser-49 carries the phosphoserine modification. The disordered stretch occupies residues 223-258; the sequence is RLREESGPPPELMPEVPLTAPAEASSTEPGAPQSAL.

The protein belongs to the bacterial ribosomal protein bS18 family. Mitochondrion-specific ribosomal protein mS40 subfamily. As to quaternary structure, component of the mitochondrial ribosome small subunit (28S) which comprises a 12S rRNA and about 30 distinct proteins.

It localises to the mitochondrion. The sequence is that of Small ribosomal subunit protein mS40 (MRPS18B) from Sus scrofa (Pig).